A 201-amino-acid polypeptide reads, in one-letter code: MTERLLVGVIVGSHGVRGLVRVKSFTQDEMALCDYGPLSDETGTRRFAVEVRNQAKGVVICQIPGVSDRTAADALKGTRLFLDRAALPADALEEDEYYHADLIGLPVDLVDGGRLGVVHSVHDFGAGDMLEVTLAQGRRSVLLPFTKAVVPLVDVKAGRLVADPPLGLLDDTRPPAGVEGEVEEDPGVGIDEDGDGKGGAS.

The region spanning 94 to 168 (EDEYYHADLI…RLVADPPLGL (75 aa)) is the PRC barrel domain. The interval 164–201 (PPLGLLDDTRPPAGVEGEVEEDPGVGIDEDGDGKGGAS) is disordered. Residues 180–194 (GEVEEDPGVGIDEDG) are compositionally biased toward acidic residues.

This sequence belongs to the RimM family. As to quaternary structure, binds ribosomal protein uS19.

Its subcellular location is the cytoplasm. In terms of biological role, an accessory protein needed during the final step in the assembly of 30S ribosomal subunit, possibly for assembly of the head region. Essential for efficient processing of 16S rRNA. May be needed both before and after RbfA during the maturation of 16S rRNA. It has affinity for free ribosomal 30S subunits but not for 70S ribosomes. The chain is Ribosome maturation factor RimM from Rhodospirillum rubrum (strain ATCC 11170 / ATH 1.1.1 / DSM 467 / LMG 4362 / NCIMB 8255 / S1).